Reading from the N-terminus, the 524-residue chain is Ribose import ATP-binding protein RbsA (524 aa).

ABC transporter domains are found at residues 17-252 and 263-505; these read LQLD…GRSI and IGQP…VSQV. 49 to 56 is an ATP binding site; that stretch reads GENGAGKS.

This sequence belongs to the ABC transporter superfamily. Ribose importer (TC 3.A.1.2.1) family. In terms of assembly, the complex is composed of an ATP-binding protein (RbsA), two transmembrane proteins (RbsC) and a solute-binding protein (RbsB).

It is found in the cell membrane. It catalyses the reaction D-ribose(out) + ATP + H2O = D-ribose(in) + ADP + phosphate + H(+). In terms of biological role, part of the ABC transporter complex RbsABC involved in ribose import. Responsible for energy coupling to the transport system. This Corynebacterium glutamicum (strain ATCC 13032 / DSM 20300 / JCM 1318 / BCRC 11384 / CCUG 27702 / LMG 3730 / NBRC 12168 / NCIMB 10025 / NRRL B-2784 / 534) protein is Ribose import ATP-binding protein RbsA.